The primary structure comprises 498 residues: Glutamyl-tRNA(Gln) amidotransferase subunit A (498 aa).

Catalysis depends on charge relay system residues lysine 79 and serine 154. The active-site Acyl-ester intermediate is serine 178.

The protein belongs to the amidase family. GatA subfamily. Heterotrimer of A, B and C subunits.

The enzyme catalyses L-glutamyl-tRNA(Gln) + L-glutamine + ATP + H2O = L-glutaminyl-tRNA(Gln) + L-glutamate + ADP + phosphate + H(+). Its function is as follows. Allows the formation of correctly charged Gln-tRNA(Gln) through the transamidation of misacylated Glu-tRNA(Gln) in organisms which lack glutaminyl-tRNA synthetase. The reaction takes place in the presence of glutamine and ATP through an activated gamma-phospho-Glu-tRNA(Gln). This chain is Glutamyl-tRNA(Gln) amidotransferase subunit A, found in Psychrobacter cryohalolentis (strain ATCC BAA-1226 / DSM 17306 / VKM B-2378 / K5).